The following is a 278-amino-acid chain: 3-methyl-2-oxobutanoate hydroxymethyltransferase 1 (278 aa).

Mg(2+) is bound by residues D49 and D88. 3-methyl-2-oxobutanoate-binding positions include 49 to 50 (DS), D88, and K118. E120 provides a ligand contact to Mg(2+). Catalysis depends on E187, which acts as the Proton acceptor.

This sequence belongs to the PanB family. Homodecamer; pentamer of dimers. It depends on Mg(2+) as a cofactor.

The protein localises to the cytoplasm. The enzyme catalyses 3-methyl-2-oxobutanoate + (6R)-5,10-methylene-5,6,7,8-tetrahydrofolate + H2O = 2-dehydropantoate + (6S)-5,6,7,8-tetrahydrofolate. It participates in cofactor biosynthesis; (R)-pantothenate biosynthesis; (R)-pantoate from 3-methyl-2-oxobutanoate: step 1/2. Catalyzes the reversible reaction in which hydroxymethyl group from 5,10-methylenetetrahydrofolate is transferred onto alpha-ketoisovalerate to form ketopantoate. The chain is 3-methyl-2-oxobutanoate hydroxymethyltransferase 1 from Hahella chejuensis (strain KCTC 2396).